Here is a 415-residue protein sequence, read N- to C-terminus: Ornithine cyclodeaminase (415 aa).

Asn-241, Ala-242, Asp-320, Thr-352, Leu-354, His-355, Asp-373, Asp-396, and Val-397 together coordinate NAD(+).

It belongs to the AgrE/ArgZ ornithine cyclodeaminase family. Requires NAD(+) as cofactor.

It catalyses the reaction L-ornithine = L-proline + NH4(+). Its function is as follows. Catalyzes the conversion of ornithine to proline, with the release of ammonia. The protein is Ornithine cyclodeaminase of Methanococcus maripaludis (strain DSM 14266 / JCM 13030 / NBRC 101832 / S2 / LL).